Consider the following 400-residue polypeptide: MISEPFLKASPILTTLISNGYEGYFVGGCVRDLLLQKDIHDIDIATSATPNEVMHLFKKVIPVGIEHGTVIVRHGGESYEVTTYRQDGEYTDHRRPNDVRFVTNLAEDLRRRDFTINALAMDTSGQITDLFHGQDDLKKKLIRTVGNAEERFTEDALRILRAVRFSSQLGCTIQEDTLEAMFVIRKQIQHLAVERITIELTKLFQGQHVSKAIQYIIDLQLDEQLPIFQSGKSDIFKAMKENITPLHSFSEVIAVFHLLDPTIKIHDWIKNYKCSNHVKNDTIQLINAYHYYQSHGINNWLLYILPTKLWDGFIRLIYVIDRTTIERKQLEEITATLPIDKRSQLHLDGNDLMNWFPHRPKGKWIKILLEEVEYLVVSKQLPNEKKIIKEWVLCNQPDPN.

ATP contacts are provided by G28 and R31. 2 residues coordinate CTP: G28 and R31. Residues D41 and D43 each contribute to the Mg(2+) site. The ATP site is built by R112, D155, R158, R161, and R164. CTP is bound by residues R112, D155, R158, R161, and R164.

The protein belongs to the tRNA nucleotidyltransferase/poly(A) polymerase family. Bacterial CCA-adding enzyme type 3 subfamily. Homodimer. Mg(2+) serves as cofactor.

It catalyses the reaction a tRNA precursor + 2 CTP + ATP = a tRNA with a 3' CCA end + 3 diphosphate. The catalysed reaction is a tRNA with a 3' CCA end + 2 CTP + ATP = a tRNA with a 3' CCACCA end + 3 diphosphate. Functionally, catalyzes the addition and repair of the essential 3'-terminal CCA sequence in tRNAs without using a nucleic acid template. Adds these three nucleotides in the order of C, C, and A to the tRNA nucleotide-73, using CTP and ATP as substrates and producing inorganic pyrophosphate. tRNA 3'-terminal CCA addition is required both for tRNA processing and repair. Also involved in tRNA surveillance by mediating tandem CCA addition to generate a CCACCA at the 3' terminus of unstable tRNAs. While stable tRNAs receive only 3'-terminal CCA, unstable tRNAs are marked with CCACCA and rapidly degraded. The sequence is that of CCA-adding enzyme from Oceanobacillus iheyensis (strain DSM 14371 / CIP 107618 / JCM 11309 / KCTC 3954 / HTE831).